A 259-amino-acid chain; its full sequence is (3R)-3-hydroxyacyl-CoA dehydrogenase (259 aa).

NAD(+)-binding positions include leucine 13–isoleucine 21 and aspartate 40–leucine 41. Serine 58 carries the phosphoserine modification. Position 66 is an N6-acetyllysine (lysine 66). Alanine 72 to valine 74 is an NAD(+) binding site. A substrate-binding site is contributed by serine 154. N6-succinyllysine is present on lysine 158. Tyrosine 167 (proton acceptor) is an active-site residue. Residues tyrosine 167–lysine 171 and isoleucine 200–threonine 202 contribute to the NAD(+) site. Lysine 171 carries the post-translational modification N6-succinyllysine.

It belongs to the short-chain dehydrogenases/reductases (SDR) family. Heterotetramer with CBR4; contains two molecules of HSD17B8 and CBR4. As to expression, kidney, liver, testis, ovary and spleen. Oviduct, uterus, mammary gland, vagina, prostate, clitoral gland and moderately heart, dorsal skin, brain and lung.

Its subcellular location is the mitochondrion matrix. It carries out the reaction a (3R)-3-hydroxyacyl-CoA + NAD(+) = a 3-oxoacyl-CoA + NADH + H(+). It catalyses the reaction 17beta-estradiol + NAD(+) = estrone + NADH + H(+). The catalysed reaction is testosterone + NAD(+) = androst-4-ene-3,17-dione + NADH + H(+). The enzyme catalyses 17beta-hydroxy-5alpha-androstan-3-one + NAD(+) = 5alpha-androstan-3,17-dione + NADH + H(+). Its pathway is lipid metabolism; fatty acid biosynthesis. The protein operates within steroid biosynthesis; estrogen biosynthesis. It functions in the pathway lipid metabolism; mitochondrial fatty acid beta-oxidation. In terms of biological role, required for the solubility and assembly of the heterotetramer 3-ketoacyl-[acyl carrier protein] (ACP) reductase functional complex (KAR or KAR1) that forms part of the mitochondrial fatty acid synthase (mtFAS). Alpha-subunit of the KAR complex, acts as scaffold protein, required for the stability of carbonyl reductase type-4 (CBR4, beta-subunit of the KAR complex) and for its 3-ketoacyl-ACP reductase activity, thereby participating in mitochondrial fatty acid biosynthesis. Catalyzes the NAD-dependent conversion of (3R)-3-hydroxyacyl-CoA into 3-ketoacyl-CoA (3-oxoacyl-CoA) with no chain length preference, this enzymatic activity is not needed for the KAR function. Prefers (3R)-3-hydroxyacyl-CoA over (3S)-3-hydroxyacyl-CoA and displays enzymatic activity only in the presence of NAD(+)(H). Cooperates with enoyl-CoA hydratase 1 in mitochondria, together they constitute an alternative route to the auxiliary enzyme pathways for the breakdown of Z-PUFA (cis polyunsaturated fatty acid) enoyl-esters. NAD-dependent 17-beta-hydroxysteroid dehydrogenase with highest activity towards estradiol. It efficiently catalyzes the oxidation of estradiol (E2), testosterone, and dihydrotestosterone. Primarily an oxidative enzyme, it can switch to a reductive mode determined in the appropriate physiologic milieu and catalyze the reduction of estrone (E1) to form biologically active estradiol (E2). In Mus musculus (Mouse), this protein is (3R)-3-hydroxyacyl-CoA dehydrogenase (Hsd17b8).